The chain runs to 271 residues: Phosphatidate cytidylyltransferase (271 aa).

Helical transmembrane passes span 12 to 32 (LLPI…ALFI), 53 to 73 (FGRV…YHLP), 75 to 95 (LAGA…VLVL), 111 to 131 (LGMG…LKQW), 136 to 156 (GLII…YFSG), 174 to 194 (WEGV…VGLY), 199 to 219 (LGAL…SIVG), and 251 to 271 (SLTA…WGAP).

It belongs to the CDS family.

The protein localises to the cell inner membrane. The catalysed reaction is a 1,2-diacyl-sn-glycero-3-phosphate + CTP + H(+) = a CDP-1,2-diacyl-sn-glycerol + diphosphate. It functions in the pathway phospholipid metabolism; CDP-diacylglycerol biosynthesis; CDP-diacylglycerol from sn-glycerol 3-phosphate: step 3/3. The sequence is that of Phosphatidate cytidylyltransferase (cdsA) from Pseudomonas aeruginosa (strain ATCC 15692 / DSM 22644 / CIP 104116 / JCM 14847 / LMG 12228 / 1C / PRS 101 / PAO1).